Consider the following 157-residue polypeptide: Protein Smg homolog (157 aa).

This sequence belongs to the Smg family.

This is Protein Smg homolog from Shewanella putrefaciens (strain CN-32 / ATCC BAA-453).